The chain runs to 377 residues: G-protein coupled receptor 54 (377 aa).

Residues 1-49 (MYSSEELWNSTEQVWINGSGTNFSLGRHEDDEEEEGDKHPFFTDAWLVP) are Extracellular-facing. N9, N17, and N22 each carry an N-linked (GlcNAc...) asparagine glycan. The chain crosses the membrane as a helical span at residues 50 to 70 (LFFSLIMLVGLVGNSLVIYVI). The Cytoplasmic portion of the chain corresponds to 71–91 (SKHRQMRTATNFYIANLAATD). Residues 92–112 (IIFLVCCVPFTATLYPLPGWI) traverse the membrane as a helical segment. Over 113-119 (FGNFMCK) the chain is Extracellular. Cysteines 118 and 198 form a disulfide. Residues 120–140 (FVAFLQQVTVQATCITLTAMS) traverse the membrane as a helical segment. The Cytoplasmic segment spans residues 141–160 (GDRCYVTVYPLKSLRHRTPK). Residues 161–181 (VAMIVSICIWIGSFVLSTPIL) form a helical membrane-spanning segment. The Extracellular segment spans residues 182-209 (MYQRIEEGYWYGPRQYCMERFPSKTHER). Residues 210–230 (AFILYQFIAAYLLPVLTISFC) traverse the membrane as a helical segment. Topologically, residues 231 to 269 (YTLMVKRVGQPTVEPVDNNYQVNLLSERTISIRSKVSKM) are cytoplasmic. Residues 270–290 (VVVIVLLFAICWGPIQIFVLF) form a helical membrane-spanning segment. The Extracellular portion of the chain corresponds to 291 to 305 (QSFYPNYQPNYATYK). Residues 306–328 (IKTWANCMSYANSSVNPIVYGFM) form a helical membrane-spanning segment. At 329–377 (GASFQKSFRKTFPFLFKHKVRDSSMASRTANAEIKFVAAEEGNNNNAVN) the chain is on the cytoplasmic side.

The protein belongs to the G-protein coupled receptor 1 family. As to expression, expressed in a significantly high percentage (45-60%) of mature GnRH1, GnRH2, and GnRH3 neurons and in immature GnRH3 neurons, which had migrated to the vicinity of their final locations in the brain. Only 5% of immature GnRH1 and GnRH2 neurons have receptor transcripts.

It localises to the cell membrane. Receptor speculated to be essential for sexual development. May regulate gonadotropin-releasing hormone (GnRH) secretion. The receptor expression could be a 'stop signal' for GnRH1, GnRH2, and GnRH3 neuronal migration, leading to suppression of cell growth and modulation of GnRH secretion, which is important for normal sexual development. This chain is G-protein coupled receptor 54 (gpr54), found in Oreochromis niloticus (Nile tilapia).